The following is a 410-amino-acid chain: Multifunctional CCA protein (410 aa).

Positions 8 and 11 each coordinate ATP. The CTP site is built by G8 and R11. The Mg(2+) site is built by D21 and D23. Positions 91, 137, and 140 each coordinate ATP. CTP is bound by residues R91, R137, and R140. Residues 225-326 enclose the HD domain; sequence SGIHTLMTLQ…LNVLKKTDAF (102 aa).

It belongs to the tRNA nucleotidyltransferase/poly(A) polymerase family. Bacterial CCA-adding enzyme type 1 subfamily. Monomer. Can also form homodimers and oligomers. The cofactor is Mg(2+). Ni(2+) serves as cofactor.

It carries out the reaction a tRNA precursor + 2 CTP + ATP = a tRNA with a 3' CCA end + 3 diphosphate. The enzyme catalyses a tRNA with a 3' CCA end + 2 CTP + ATP = a tRNA with a 3' CCACCA end + 3 diphosphate. Its function is as follows. Catalyzes the addition and repair of the essential 3'-terminal CCA sequence in tRNAs without using a nucleic acid template. Adds these three nucleotides in the order of C, C, and A to the tRNA nucleotide-73, using CTP and ATP as substrates and producing inorganic pyrophosphate. tRNA 3'-terminal CCA addition is required both for tRNA processing and repair. Also involved in tRNA surveillance by mediating tandem CCA addition to generate a CCACCA at the 3' terminus of unstable tRNAs. While stable tRNAs receive only 3'-terminal CCA, unstable tRNAs are marked with CCACCA and rapidly degraded. This Neisseria gonorrhoeae (strain NCCP11945) protein is Multifunctional CCA protein.